Here is a 264-residue protein sequence, read N- to C-terminus: Small ribosomal subunit protein eS1 (264 aa).

Lysine 34 is subject to N6-acetyllysine; alternate. A Glycyl lysine isopeptide (Lys-Gly) (interchain with G-Cter in SUMO2); alternate cross-link involves residue lysine 34. At lysine 56 the chain carries N6-acetyllysine. Tyrosine 155 is subject to ADP-ribosyltyrosine. A disordered region spans residues 232–264 (HGEGSSSGKATGDETGAKVERADGYEPPVQESV). 2 positions are modified to phosphoserine: serine 236 and serine 237. Residues 242-255 (TGDETGAKVERADG) are compositionally biased toward basic and acidic residues. Residue lysine 249 is modified to N6-acetyllysine; alternate. A Glycyl lysine isopeptide (Lys-Gly) (interchain with G-Cter in SUMO2); alternate cross-link involves residue lysine 249. The residue at position 256 (tyrosine 256) is a Phosphotyrosine. Serine 263 carries the phosphoserine modification.

It belongs to the eukaryotic ribosomal protein eS1 family. In terms of assembly, component of the small ribosomal subunit. Mature ribosomes consist of a small (40S) and a large (60S) subunit. The 40S subunit contains about 33 different proteins and 1 molecule of RNA (18S). The 60S subunit contains about 49 different proteins and 3 molecules of RNA (28S, 5.8S and 5S). Identified in a IGF2BP1-dependent mRNP granule complex containing untranslated mRNAs. Binds with high affinity to IPO4. Interacts with DDIT3. Part of the small subunit (SSU) processome, composed of more than 70 proteins and the RNA chaperone small nucleolar RNA (snoRNA) U3. In terms of processing, ADP-ribosylated at Tyr-155 by PARP1 in presence of HPF1.

Its subcellular location is the cytoplasm. The protein localises to the nucleus. It is found in the nucleolus. Component of the small ribosomal subunit. The ribosome is a large ribonucleoprotein complex responsible for the synthesis of proteins in the cell. Part of the small subunit (SSU) processome, first precursor of the small eukaryotic ribosomal subunit. During the assembly of the SSU processome in the nucleolus, many ribosome biogenesis factors, an RNA chaperone and ribosomal proteins associate with the nascent pre-rRNA and work in concert to generate RNA folding, modifications, rearrangements and cleavage as well as targeted degradation of pre-ribosomal RNA by the RNA exosome. May play a role during erythropoiesis through regulation of transcription factor DDIT3. The protein is Small ribosomal subunit protein eS1 of Macaca fascicularis (Crab-eating macaque).